Reading from the N-terminus, the 239-residue chain is Ribonuclease P protein component 3 (239 aa).

It belongs to the eukaryotic/archaeal RNase P protein component 3 family. Consists of a catalytic RNA component and at least 4-5 protein subunits.

The protein localises to the cytoplasm. It catalyses the reaction Endonucleolytic cleavage of RNA, removing 5'-extranucleotides from tRNA precursor.. Its function is as follows. Part of ribonuclease P, a protein complex that generates mature tRNA molecules by cleaving their 5'-ends. This is Ribonuclease P protein component 3 from Methanosarcina barkeri (strain Fusaro / DSM 804).